Consider the following 129-residue polypeptide: Small ribosomal subunit protein bS6 (129 aa).

Residues 110–121 (FVRRDDERREDT) are compositionally biased toward basic and acidic residues. The interval 110-129 (FVRRDDERREDTVEAASSEE) is disordered.

It belongs to the bacterial ribosomal protein bS6 family.

In terms of biological role, binds together with bS18 to 16S ribosomal RNA. This is Small ribosomal subunit protein bS6 from Aeromonas salmonicida (strain A449).